Here is an 887-residue protein sequence, read N- to C-terminus: Pre-mRNA-splicing factor cwf22 (887 aa).

The interval 1-27 (MEKEDKSFGIGMLDYNRENPESSGHSR) is disordered. Residues 124 to 307 (KKSINGLINK…EVLFQTRKDK (184 aa)) enclose the MIF4G domain. The disordered stretch occupies residues 366-401 (ILGEEDDDENEEDEEDSEETSESEEDESVNDEKPQV). Over residues 368 to 394 (GEEDDDENEEDEEDSEETSESEEDESV) the composition is skewed to acidic residues. Positions 411 to 527 (NLRKSIYLTI…GWEVYDCVRL (117 aa)) constitute an MI domain. Disordered stretches follow at residues 607-834 (MPKS…KTYH) and 867-887 (GELY…PRAD). Residues 618–662 (EGYSSGSETGSTYSSSYSSTYSRGRSYSRSTRSYSKSRSYSRSRS) show a composition bias toward low complexity. Ser-662 bears the Phosphoserine mark. At Thr-664 the chain carries Phosphothreonine. Basic and acidic residues predominate over residues 677 to 690 (KDRELSPRGRERSS). The span at 691–712 (NRNSYSDLSRSSSLSRGRSRSY) shows a compositional bias: low complexity. A compositionally biased stretch (basic and acidic residues) spans 717–726 (RLIESEDKGY). Over residues 736–746 (RKYRSRQRYRR) the composition is skewed to basic residues. Composition is skewed to low complexity over residues 747–762 (SYAG…SRSP) and 769–791 (SMSC…SRSP). Residues 799 to 809 (DSLSYNRQYSP) are compositionally biased toward polar residues.

The protein belongs to the CWC22 family. As to quaternary structure, belongs to the 40S cdc5-associated complex (or cwf complex), a spliceosome sub-complex reminiscent of a late-stage spliceosome composed of the U2, U5 and U6 snRNAs and at least brr2, cdc5, cwf2/prp3, cwf3/syf1, cwf4/syf3, cwf5/ecm2, spp42/cwf6, cwf7/spf27, cwf8, cwf9, cwf10, cwf11, cwf12, prp45/cwf13, cwf14, cwf15, cwf16, cwf17, cwf18, cwf19, cwf20, cwf21, cwf22, cwf23, cwf24, cwf25, cwf26, cyp7/cwf27, cwf28, cwf29/ist3, lea1, msl1, prp5/cwf1, prp10, prp12/sap130, prp17, prp22, sap61, sap62, sap114, sap145, slu7, smb1, smd1, smd3, smf1, smg1 and syf2.

The protein resides in the cytoplasm. It localises to the nucleus. Its function is as follows. May be involved in pre-mRNA splicing. In Schizosaccharomyces pombe (strain 972 / ATCC 24843) (Fission yeast), this protein is Pre-mRNA-splicing factor cwf22 (cwf22).